Here is an 873-residue protein sequence, read N- to C-terminus: Protein SEY1 (873 aa).

The tract at residues 1 to 21 (MVANGHFAGSADGQDSSSYEH) is disordered. At 1 to 749 (MVANGHFAGS…KRSAIGGITQ (749 aa)) the chain is on the cytoplasmic side. The region spanning 49–307 (GFNYHLISVF…IPADGFAVYA (259 aa)) is the GB1/RHD3-type G domain. 59–66 (GSQSTGKS) contributes to the GTP binding site. Residues 482–506 (SNYQQELSLYQKDLERTSGQLRRDE) are a coiled coil. The tract at residues 676–703 (LDKWIGHTPSSATPADEEDLTPIGGVDD) is disordered. Residues 690–703 (ADEEDLTPIGGVDD) are compositionally biased toward acidic residues. The helical transmembrane segment at 750 to 770 (VPLYFYGLLFALGWNEILAVL) threads the bilayer. The Lumenal portion of the chain corresponds to 771–773 (RNP). Residues 774 to 794 (VYFLLLFVCAIGAYITYQLNL) traverse the membrane as a helical segment. Residues 795-873 (WGPIIKMTEA…EDVDDDDDDF (79 aa)) are Cytoplasmic-facing. The tract at residues 828 to 873 (RQAMAMSGARNATEEHEMSRLSRKPAERGGRKNRADEDVDDDDDDF) is disordered. Residues 839–863 (ATEEHEMSRLSRKPAERGGRKNRAD) show a composition bias toward basic and acidic residues. Residues 864–873 (EDVDDDDDDF) show a composition bias toward acidic residues.

The protein belongs to the TRAFAC class dynamin-like GTPase superfamily. GB1/RHD3 GTPase family. RHD3 subfamily.

It is found in the endoplasmic reticulum membrane. Its function is as follows. Cooperates with the reticulon proteins and tubule-shaping DP1 family proteins to generate and maintain the structure of the tubular endoplasmic reticulum network. Has GTPase activity, which is required for its function in ER organization. This Ajellomyces capsulatus (strain G186AR / H82 / ATCC MYA-2454 / RMSCC 2432) (Darling's disease fungus) protein is Protein SEY1.